Reading from the N-terminus, the 1276-residue chain is Component of gems protein 5 (1276 aa).

An interaction with U4 snRNA region spans residues 53–55; sequence NWY. WD repeat units follow at residues 92 to 139, 183 to 223, 228 to 268, 271 to 336, 364 to 405, 438 to 481, 485 to 522, and 530 to 574; these read GHTD…DDHN, EHKA…VFPI, GNNI…TVCK, AHSA…IESG, NDKQ…SPPE, TTKN…IKIQ, GFVY…KDAY, and GIQS…SKIF. Residues 138 to 157 are disordered; sequence HNEDTEIGDDFKHGSGGGGS. The disordered stretch occupies residues 586-652; that stretch reads IWKPPPTPTP…NSNNEQQPNK (67 aa). The span at 598-646 shows a compositional bias: low complexity; it reads NINNNNNNNNNNNNNNNNNNNNNNNNNNNNNNNNNNNNINNNNNNNSNN. WD repeat units follow at residues 688 to 727 and 729 to 771; these read TFSK…LTRI and EHKK…NQNE. The span at 772-793 shows a compositional bias: basic and acidic residues; sequence NEKKIDNEKGKENENEKGKENE. The segment at 772–809 is disordered; sequence NEKKIDNEKGKENENEKGKENENENENENENENENENE. Positions 778–829 form a coiled coil; that stretch reads NEKGKENENEKGKENENENENENENENENENENEIENIVNNNNENDTEIEIK. Over residues 794-809 the composition is skewed to acidic residues; sequence NENENENENENENENE. 2 WD repeats span residues 863 to 903 and 906 to 946; these read GHKN…AISN and GHDG…FKTV. Residues 967–997 form a disordered region; that stretch reads ITEQQQQQQQPQSPIKSNPDQSNNPSLVPPI. Polar residues predominate over residues 979–992; sequence SPIKSNPDQSNNPS.

This sequence belongs to the WD repeat gemin-5 family. In terms of assembly, part of the core SMN complex.

The protein resides in the nucleus. The protein localises to the nucleoplasm. It is found in the gem. It localises to the cytoplasm. Functionally, the SMN complex catalyzes the assembly of small nuclear ribonucleoproteins (snRNPs), the building blocks of the spliceosome, and thereby plays an important role in the splicing of cellular pre-mRNAs. Most spliceosomal snRNPs contain a common set of Sm proteins SNRPB, SNRPD1, SNRPD2, SNRPD3, SNRPE, SNRPF and SNRPG that assemble in a heptameric protein ring on the Sm site of the small nuclear RNA to form the core snRNP (Sm core). In the cytosol, the Sm proteins SNRPD1, SNRPD2, SNRPE, SNRPF and SNRPG are trapped in an inactive 6S pICln-Sm complex by the chaperone CLNS1A that controls the assembly of the core snRNP. To assemble core snRNPs, the SMN complex accepts the trapped 5Sm proteins from CLNS1A forming an intermediate. Binding of snRNA inside 5Sm ultimately triggers eviction of the SMN complex, thereby allowing binding of SNRPD3 and SNRPB to complete assembly of the core snRNP. Within the SMN complex, GEMIN5 recognizes and delivers the small nuclear RNAs (snRNAs) to the SMN complex. Binds to the 7-methylguanosine cap of RNA molecules. The sequence is that of Component of gems protein 5 (gemin5) from Dictyostelium discoideum (Social amoeba).